The sequence spans 514 residues: 2,3-bisphosphoglycerate-independent phosphoglycerate mutase (514 aa).

Positions 12 and 62 each coordinate Mn(2+). Ser62 acts as the Phosphoserine intermediate in catalysis. Substrate contacts are provided by residues His123, 153-154, Arg185, Arg191, 260-263, and Lys335; these read RD and RPDR. Asp402, His406, Asp443, His444, and His462 together coordinate Mn(2+).

The protein belongs to the BPG-independent phosphoglycerate mutase family. In terms of assembly, monomer. The cofactor is Mn(2+).

The enzyme catalyses (2R)-2-phosphoglycerate = (2R)-3-phosphoglycerate. It functions in the pathway carbohydrate degradation; glycolysis; pyruvate from D-glyceraldehyde 3-phosphate: step 3/5. Its function is as follows. Catalyzes the interconversion of 2-phosphoglycerate and 3-phosphoglycerate. This is 2,3-bisphosphoglycerate-independent phosphoglycerate mutase from Lachnoclostridium phytofermentans (strain ATCC 700394 / DSM 18823 / ISDg) (Clostridium phytofermentans).